Consider the following 226-residue polypeptide: UPF0173 metal-dependent hydrolase Dgeo_0136 (226 aa).

The protein belongs to the UPF0173 family.

This Deinococcus geothermalis (strain DSM 11300 / CIP 105573 / AG-3a) protein is UPF0173 metal-dependent hydrolase Dgeo_0136.